The following is a 337-amino-acid chain: Glyceraldehyde-3-phosphate dehydrogenase (337 aa).

NAD(+) contacts are provided by residues 12 to 13 (RI), Asp-34, and Lys-79. D-glyceraldehyde 3-phosphate-binding positions include 150-152 (SCT), Thr-181, 210-211 (TG), and Arg-233. Cys-151 (nucleophile) is an active-site residue. Position 315 (Asn-315) interacts with NAD(+).

The protein belongs to the glyceraldehyde-3-phosphate dehydrogenase family. Homotetramer.

It is found in the cytoplasm. The enzyme catalyses D-glyceraldehyde 3-phosphate + phosphate + NAD(+) = (2R)-3-phospho-glyceroyl phosphate + NADH + H(+). The protein operates within carbohydrate degradation; glycolysis; pyruvate from D-glyceraldehyde 3-phosphate: step 1/5. The chain is Glyceraldehyde-3-phosphate dehydrogenase (GPD) from Schizophyllum commune (Split gill fungus).